A 901-amino-acid polypeptide reads, in one-letter code: Viral-enhancing factor (901 aa).

In terms of domain architecture, Peptidase M60 spans 27-330 (HRRTEVGVVL…IFTWLYNPQR (304 aa)). Asn-65, Asn-265, Asn-339, Asn-349, Asn-540, Asn-594, Asn-595, Asn-642, Asn-683, and Asn-698 each carry an N-linked (GlcNAc...) asparagine; by host glycan.

In terms of biological role, involved in disruption of the peritrophic membrane and fusion of nucleocapsids with midgut cells. This is Viral-enhancing factor (VEF) from Trichoplusia ni (Cabbage looper).